Reading from the N-terminus, the 181-residue chain is Ribonuclease HII (181 aa).

Residues 1–181 (MICGIDEVGR…SLHRKNFKLI (181 aa)) enclose the RNase H type-2 domain. Residues Asp-6, Glu-7, and Asp-98 each coordinate a divalent metal cation.

It belongs to the RNase HII family. Requires Mn(2+) as cofactor. Mg(2+) serves as cofactor.

Its subcellular location is the cytoplasm. It catalyses the reaction Endonucleolytic cleavage to 5'-phosphomonoester.. Its function is as follows. Endonuclease that specifically degrades the RNA of RNA-DNA hybrids. This Borreliella afzelii (strain PKo) (Borrelia afzelii) protein is Ribonuclease HII.